We begin with the raw amino-acid sequence, 337 residues long: Succinylglutamate desuccinylase (337 aa).

Positions 59, 62, and 152 each coordinate Zn(2+). Glutamate 216 is an active-site residue.

Belongs to the AspA/AstE family. Succinylglutamate desuccinylase subfamily. Requires Zn(2+) as cofactor.

It catalyses the reaction N-succinyl-L-glutamate + H2O = L-glutamate + succinate. Its pathway is amino-acid degradation; L-arginine degradation via AST pathway; L-glutamate and succinate from L-arginine: step 5/5. Functionally, transforms N(2)-succinylglutamate into succinate and glutamate. This chain is Succinylglutamate desuccinylase, found in Ectopseudomonas mendocina (strain ymp) (Pseudomonas mendocina).